The chain runs to 338 residues: Elongation factor Ts, mitochondrial (338 aa).

Residues 1 to 55 (MSLLRSLRLCLVARTGSCPLSALGPGPLLPSLQAGLPLLQSPQQWHTFHSGSWLS) constitute a mitochondrion transit peptide. N6-succinyllysine is present on residues Lys-89, Lys-146, and Lys-205. Ser-283 is subject to Phosphoserine.

The protein belongs to the EF-Ts family.

The protein localises to the mitochondrion. Functionally, associates with the EF-Tu.GDP complex and induces the exchange of GDP to GTP. It remains bound to the aminoacyl-tRNA.EF-Tu.GTP complex up to the GTP hydrolysis stage on the ribosome. The chain is Elongation factor Ts, mitochondrial from Bos taurus (Bovine).